Reading from the N-terminus, the 201-residue chain is Large ribosomal subunit protein uL4 (201 aa).

Positions 42–67 (GNSAQKTRSEVSGGGKKPWNQKGTGR) are disordered.

It belongs to the universal ribosomal protein uL4 family. Part of the 50S ribosomal subunit.

Its function is as follows. One of the primary rRNA binding proteins, this protein initially binds near the 5'-end of the 23S rRNA. It is important during the early stages of 50S assembly. It makes multiple contacts with different domains of the 23S rRNA in the assembled 50S subunit and ribosome. In terms of biological role, forms part of the polypeptide exit tunnel. This is Large ribosomal subunit protein uL4 from Legionella pneumophila (strain Corby).